Reading from the N-terminus, the 707-residue chain is Polyribonucleotide nucleotidyltransferase (707 aa).

The Mg(2+) site is built by D485 and D491. In terms of domain architecture, KH spans P552–I611. Positions G621–K689 constitute an S1 motif domain.

The protein belongs to the polyribonucleotide nucleotidyltransferase family. As to quaternary structure, component of the RNA degradosome, which is a multiprotein complex involved in RNA processing and mRNA degradation. Mg(2+) serves as cofactor.

The protein localises to the cytoplasm. It catalyses the reaction RNA(n+1) + phosphate = RNA(n) + a ribonucleoside 5'-diphosphate. Its function is as follows. Involved in mRNA degradation. Catalyzes the phosphorolysis of single-stranded polyribonucleotides processively in the 3'- to 5'-direction. In Photobacterium profundum (strain SS9), this protein is Polyribonucleotide nucleotidyltransferase.